The sequence spans 34 residues: Cycloamanide B proprotein (34 aa).

Positions 1–10 (MSDINAARLP) are excised as a propeptide. A cross-link (cyclopeptide (Ser-Pro)) is located at residues 11–17 (SFFFPIP). The propeptide occupies 18-34 (CISDDIEMVLTRGESLC).

This sequence belongs to the MSDIN fungal toxin family. Processed by the macrocyclase-peptidase enzyme POPB to yield a cyclic decapeptide. POPB first removes 10 residues from the N-terminus. Conformational trapping of the remaining peptide forces the enzyme to release this intermediate rather than proceed to macrocyclization. The enzyme rebinds the remaining peptide in a different conformation and catalyzes macrocyclization of the N-terminal 7 residues.

In terms of biological role, cyclic heptapeptide that belongs to the MSDIN-like toxin family responsible for a large number of food poisoning cases and deaths. Cycloaminide B is non-toxic to mammals but shows immunosuppressive activity, probably through the inhibition of the action of interleukin-1 and interleukin-2. This chain is Cycloamanide B proprotein, found in Amanita phalloides (Death cap).